Reading from the N-terminus, the 321-residue chain is MVTVLDLVNQGKRERHPEKAHRPDNVVLKKPEWIRVKAPVSRGYSETRDIVRSNKLVTVCEEAGCPNIGECWEKKHATFMIMGEICTRACAFCNVSTGIPTALDPNEPENVAKAVKQMGLTHVVITSVDRDDLADGGAQHFAEVIQAIREATPATTIEILTPDFLRKEGALEVVVRARPDVFNHNLETVPSRYLKVRPGARYFHSIRLLQRVKELDPTIFTKSGIMVGLGEERNEILQLMDDLRSADVDFMTIGQYLQPTRKHHPVIRFVTPDEFKSFETIGRTKGFLLVASSPLTRSSHHAGDDFAKLRAAREAQISARA.

7 residues coordinate [4Fe-4S] cluster: C60, C65, C71, C86, C90, C93, and S299. The Radical SAM core domain maps to 72-288; it reads WEKKHATFMI…ETIGRTKGFL (217 aa).

The protein belongs to the radical SAM superfamily. Lipoyl synthase family. The cofactor is [4Fe-4S] cluster.

The protein resides in the cytoplasm. It carries out the reaction [[Fe-S] cluster scaffold protein carrying a second [4Fe-4S](2+) cluster] + N(6)-octanoyl-L-lysyl-[protein] + 2 oxidized [2Fe-2S]-[ferredoxin] + 2 S-adenosyl-L-methionine + 4 H(+) = [[Fe-S] cluster scaffold protein] + N(6)-[(R)-dihydrolipoyl]-L-lysyl-[protein] + 4 Fe(3+) + 2 hydrogen sulfide + 2 5'-deoxyadenosine + 2 L-methionine + 2 reduced [2Fe-2S]-[ferredoxin]. Its pathway is protein modification; protein lipoylation via endogenous pathway; protein N(6)-(lipoyl)lysine from octanoyl-[acyl-carrier-protein]: step 2/2. Catalyzes the radical-mediated insertion of two sulfur atoms into the C-6 and C-8 positions of the octanoyl moiety bound to the lipoyl domains of lipoate-dependent enzymes, thereby converting the octanoylated domains into lipoylated derivatives. The sequence is that of Lipoyl synthase from Brucella anthropi (strain ATCC 49188 / DSM 6882 / CCUG 24695 / JCM 21032 / LMG 3331 / NBRC 15819 / NCTC 12168 / Alc 37) (Ochrobactrum anthropi).